Reading from the N-terminus, the 407-residue chain is uncharacterized protein (407 aa).

Lys-22 participates in a covalent cross-link: Glycyl lysine isopeptide (Lys-Gly) (interchain with G-Cter in ubiquitin).

The protein belongs to the SVF1 family.

The protein resides in the cytoplasm. This is an uncharacterized protein from Saccharomyces cerevisiae (strain ATCC 204508 / S288c) (Baker's yeast).